A 126-amino-acid chain; its full sequence is Holo-[acyl-carrier-protein] synthase (126 aa).

Residues Asp-9 and Glu-58 each coordinate Mg(2+).

Belongs to the P-Pant transferase superfamily. AcpS family. Mg(2+) is required as a cofactor.

The protein resides in the cytoplasm. It carries out the reaction apo-[ACP] + CoA = holo-[ACP] + adenosine 3',5'-bisphosphate + H(+). In terms of biological role, transfers the 4'-phosphopantetheine moiety from coenzyme A to a Ser of acyl-carrier-protein. The polypeptide is Holo-[acyl-carrier-protein] synthase (Photorhabdus laumondii subsp. laumondii (strain DSM 15139 / CIP 105565 / TT01) (Photorhabdus luminescens subsp. laumondii)).